Consider the following 199-residue polypeptide: NADH-quinone oxidoreductase subunit C (199 aa).

This sequence belongs to the complex I 30 kDa subunit family. As to quaternary structure, NDH-1 is composed of 14 different subunits. Subunits NuoB, C, D, E, F, and G constitute the peripheral sector of the complex.

It localises to the cell membrane. It catalyses the reaction a quinone + NADH + 5 H(+)(in) = a quinol + NAD(+) + 4 H(+)(out). Its function is as follows. NDH-1 shuttles electrons from NADH, via FMN and iron-sulfur (Fe-S) centers, to quinones in the respiratory chain. The immediate electron acceptor for the enzyme in this species is believed to be ubiquinone. Couples the redox reaction to proton translocation (for every two electrons transferred, four hydrogen ions are translocated across the cytoplasmic membrane), and thus conserves the redox energy in a proton gradient. The chain is NADH-quinone oxidoreductase subunit C from Polynucleobacter asymbioticus (strain DSM 18221 / CIP 109841 / QLW-P1DMWA-1) (Polynucleobacter necessarius subsp. asymbioticus).